A 28-amino-acid polypeptide reads, in one-letter code: Alpha-(1-6)-linked fucose-specific lectin (28 aa).

In terms of assembly, homohexamer. In terms of tissue distribution, expressed by mycelium-forming spores.

The protein resides in the secreted. Alpha-(1-6)-linked L-fucose specific lectin. In Rhizopus stolonifer (Rhizopus nigricans), this protein is Alpha-(1-6)-linked fucose-specific lectin.